The primary structure comprises 356 residues: Peptide chain release factor 1 (356 aa).

Gln-235 bears the N5-methylglutamine mark.

Belongs to the prokaryotic/mitochondrial release factor family. In terms of processing, methylated by PrmC. Methylation increases the termination efficiency of RF1.

The protein localises to the cytoplasm. Peptide chain release factor 1 directs the termination of translation in response to the peptide chain termination codons UAG and UAA. The chain is Peptide chain release factor 1 from Mycobacteroides abscessus (strain ATCC 19977 / DSM 44196 / CCUG 20993 / CIP 104536 / JCM 13569 / NCTC 13031 / TMC 1543 / L948) (Mycobacterium abscessus).